Reading from the N-terminus, the 279-residue chain is Large ribosomal subunit protein uL2 (279 aa).

2 disordered regions span residues 33–58 (LLAP…GGGH) and 223–279 (GVAM…RKRG). Composition is skewed to basic residues over residues 40–58 (KGGR…GGGH) and 269–279 (VRRRYATRKRG).

The protein belongs to the universal ribosomal protein uL2 family. In terms of assembly, part of the 50S ribosomal subunit. Forms a bridge to the 30S subunit in the 70S ribosome.

One of the primary rRNA binding proteins. Required for association of the 30S and 50S subunits to form the 70S ribosome, for tRNA binding and peptide bond formation. It has been suggested to have peptidyltransferase activity; this is somewhat controversial. Makes several contacts with the 16S rRNA in the 70S ribosome. The sequence is that of Large ribosomal subunit protein uL2 from Salinispora arenicola (strain CNS-205).